Here is a 404-residue protein sequence, read N- to C-terminus: Caspase-1 (404 aa).

In terms of domain architecture, CARD spans 1 to 91; that stretch reads MADKVLKDKR…HLAQTLGLSS (91 aa). A propeptide spanning residues 1–119 is cleaved from the precursor; the sequence is MADKVLKDKR…SLPAFVENMP (119 aa). Catalysis depends on residues histidine 237 and cysteine 285. Residues 298–316 constitute a propeptide that is removed on maturation; it reads SPKASTDSWTHQPLMLQSD. A Phosphoserine modification is found at serine 302.

The protein belongs to the peptidase C14A family. As to quaternary structure, heterotetramer that consists of two anti-parallel arranged heterodimers, each one formed by a 20 kDa (Caspase-1 subunit p20) and a 10 kDa (Caspase-1 subunit p10) subunit. May be a component of the inflammasome, a protein complex which also includes PYCARD, CARD8 and NLRP2 and whose function would be the activation of pro-inflammatory caspases. Component of the AIM2 PANoptosome complex, a multiprotein complex that drives inflammatory cell death (PANoptosis). Both the p10 and p20 subunits interact with MEFV. Interacts with CARD17P/INCA and CARD18. Interacts with SERPINB1; this interaction regulates CASP1 activity. In terms of assembly, heterotetramer that consists of two anti-parallel arranged heterodimers, each one formed by a 20 kDa (Caspase-1 subunit p20) and a 10 kDa (Caspase-1 subunit p10) subunit. The two subunits are derived from the precursor sequence by an autocatalytic mechanism. In terms of processing, ubiquitinated via 'Lys-11'-linked polyubiquitination. Deubiquitinated by USP8.

The protein resides in the cytoplasm. It localises to the cell membrane. The catalysed reaction is Strict requirement for an Asp residue at position P1 and has a preferred cleavage sequence of Tyr-Val-Ala-Asp-|-.. Functionally, thiol protease involved in a variety of inflammatory processes by proteolytically cleaving other proteins, such as the precursors of the inflammatory cytokines interleukin-1 beta (IL1B) and interleukin 18 (IL18) as well as the pyroptosis inducer Gasdermin-D (GSDMD), into active mature peptides. Plays a key role in cell immunity as an inflammatory response initiator: once activated through formation of an inflammasome complex, it initiates a pro-inflammatory response through the cleavage of the two inflammatory cytokines IL1B and IL18, releasing the mature cytokines which are involved in a variety of inflammatory processes. Cleaves a tetrapeptide after an Asp residue at position P1. Also initiates pyroptosis, a programmed lytic cell death pathway, through cleavage of GSDMD. In contrast to cleavage of interleukin IL1B, recognition and cleavage of GSDMD is not strictly dependent on the consensus cleavage site but depends on an exosite interface on CASP1 that recognizes and binds the Gasdermin-D, C-terminal (GSDMD-CT) part. Cleaves and activates CASP7 in response to bacterial infection, promoting plasma membrane repair. Upon inflammasome activation, during DNA virus infection but not RNA virus challenge, controls antiviral immunity through the cleavage of CGAS, rendering it inactive. In apoptotic cells, cleaves SPHK2 which is released from cells and remains enzymatically active extracellularly. In Canis lupus familiaris (Dog), this protein is Caspase-1 (CASP1).